Reading from the N-terminus, the 559-residue chain is Thrombospondin-related anonymous protein (559 aa).

The signal sequence occupies residues 1–25 (MNHLGNVKYLVIVFLIFFDLFLVNG). The Extracellular portion of the chain corresponds to 26 to 496 (RDVQNNIVDE…KKGESDNKYK (471 aa)). A VWFA domain is found at 48-234 (DLYLLMDCSG…NVIGPFMKAV (187 aa)). Isoglutamyl lysine isopeptide (Gln-Lys) (interchain with K-? in Factor 3(A)) cross-links involve residues Gln77 and Gln78. Asn132 carries N-linked (GlcNAc...) asparagine glycosylation. The 47-residue stretch at 241 to 287 (TASCGVWDEWSPCSVTCGKGTRSRKREILHEGCTSEIQEQCEEERCP) folds into the TSP type-1 domain. 3 cysteine pairs are disulfide-bonded: Cys244-Cys273, Cys253-Cys281, and Cys257-Cys286. Residues 280-496 (QCEEERCPPK…KKGESDNKYK (217 aa)) are disordered. The span at 283-292 (EERCPPKWEP) shows a compositional bias: basic and acidic residues. Residues 307–309 (RGD) carry the Cell attachment site motif. N-linked (GlcNAc...) asparagine glycosylation occurs at Asn310. Residues 370-400 (KEVPSDVPKNPEDDREENFDIPKKPENKHDN) are compositionally biased toward basic and acidic residues. The segment covering 431 to 440 (DPQSQDNNGN) has biased composition (polar residues). Over residues 444 to 459 (PNSEDRETRPHGRNNE) the composition is skewed to basic and acidic residues. N-linked (GlcNAc...) asparagine glycosylation occurs at Asn460. Residues 466-495 (KYNDTPKHPEREEHEKPDNNKKKGESDNKY) show a composition bias toward basic and acidic residues. A helical transmembrane segment spans residues 497–515 (IAGGIAGGLALLACAGLAY). The Cytoplasmic portion of the chain corresponds to 516 to 559 (KFVVPGAATPYAGEPAPFDETLGEEDKDLDEPEQFRLPEENEWN). A disordered region spans residues 523–559 (ATPYAGEPAPFDETLGEEDKDLDEPEQFRLPEENEWN). Over residues 536–547 (TLGEEDKDLDEP) the composition is skewed to acidic residues. The segment covering 548–559 (EQFRLPEENEWN) has biased composition (basic and acidic residues).

It is found in the cell membrane. This Plasmodium falciparum protein is Thrombospondin-related anonymous protein (TRAP).